We begin with the raw amino-acid sequence, 651 residues long: UvrABC system protein B (651 aa).

One can recognise a Helicase ATP-binding domain in the interval 25–178; sequence RGISCGAKEQ…CQLQERLVEL (154 aa). Residue 38 to 45 participates in ATP binding; sequence GVTGSGKT. The Beta-hairpin signature appears at 91-114; it reads YYDYYQPEAYIPQSDVYIEKDALI. A Helicase C-terminal domain is found at 427–591; that stretch reads DGQIHDVMCE…IVPRTIQKPV (165 aa). The interval 593-615 is disordered; that stretch reads TSLSERVGSSRKKVSRDTNTDPA. In terms of domain architecture, UVR spans 616–651; it reads NRDIVELQKEMLLCAENLDFERAVEIRNEIKRLTAP.

The protein belongs to the UvrB family. In terms of assembly, forms a heterotetramer with UvrA during the search for lesions. Interacts with UvrC in an incision complex.

The protein resides in the cytoplasm. The UvrABC repair system catalyzes the recognition and processing of DNA lesions. A damage recognition complex composed of 2 UvrA and 2 UvrB subunits scans DNA for abnormalities. Upon binding of the UvrA(2)B(2) complex to a putative damaged site, the DNA wraps around one UvrB monomer. DNA wrap is dependent on ATP binding by UvrB and probably causes local melting of the DNA helix, facilitating insertion of UvrB beta-hairpin between the DNA strands. Then UvrB probes one DNA strand for the presence of a lesion. If a lesion is found the UvrA subunits dissociate and the UvrB-DNA preincision complex is formed. This complex is subsequently bound by UvrC and the second UvrB is released. If no lesion is found, the DNA wraps around the other UvrB subunit that will check the other stand for damage. This Anaplasma marginale (strain Florida) protein is UvrABC system protein B.